The primary structure comprises 306 residues: Tyrosine recombinase XerC (306 aa).

A Core-binding (CB) domain is found at 1–85 (MQQQLEQFLA…AIKSFFEYLQ (85 aa)). Residues 106 to 289 (FLPKAITVAQ…SNDRAVKYDQ (184 aa)) form the Tyr recombinase domain. Residues R147, K171, H241, R244, and H267 contribute to the active site. Residue Y276 is the O-(3'-phospho-DNA)-tyrosine intermediate of the active site.

It belongs to the 'phage' integrase family. XerC subfamily. Forms a cyclic heterotetrameric complex composed of two molecules of XerC and two molecules of XerD.

It is found in the cytoplasm. Its function is as follows. Site-specific tyrosine recombinase, which acts by catalyzing the cutting and rejoining of the recombining DNA molecules. The XerC-XerD complex is essential to convert dimers of the bacterial chromosome into monomers to permit their segregation at cell division. It also contributes to the segregational stability of plasmids. The chain is Tyrosine recombinase XerC from Herpetosiphon aurantiacus (strain ATCC 23779 / DSM 785 / 114-95).